Here is a 203-residue protein sequence, read N- to C-terminus: ATP-dependent Clp protease proteolytic subunit (203 aa).

Ser101 acts as the Nucleophile in catalysis. Residue His126 is part of the active site.

Belongs to the peptidase S14 family. As to quaternary structure, component of the chloroplastic Clp protease core complex.

The protein resides in the plastid. The protein localises to the chloroplast stroma. The enzyme catalyses Hydrolysis of proteins to small peptides in the presence of ATP and magnesium. alpha-casein is the usual test substrate. In the absence of ATP, only oligopeptides shorter than five residues are hydrolyzed (such as succinyl-Leu-Tyr-|-NHMec, and Leu-Tyr-Leu-|-Tyr-Trp, in which cleavage of the -Tyr-|-Leu- and -Tyr-|-Trp bonds also occurs).. Its function is as follows. Cleaves peptides in various proteins in a process that requires ATP hydrolysis. Has a chymotrypsin-like activity. Plays a major role in the degradation of misfolded proteins. This chain is ATP-dependent Clp protease proteolytic subunit, found in Marchantia polymorpha (Common liverwort).